The chain runs to 91 residues: Small ribosomal subunit protein bS16 (91 aa).

Belongs to the bacterial ribosomal protein bS16 family.

This Staphylococcus aureus (strain Mu3 / ATCC 700698) protein is Small ribosomal subunit protein bS16.